The sequence spans 735 residues: Urea active transporter (735 aa).

Residues 1–14 are Cytoplasmic-facing; it reads MGEFKPPLPQGAGY. The helical transmembrane segment at 15 to 35 threads the bilayer; the sequence is AIVLGLGAVFAGMMVLTTYLL. The Extracellular segment spans residues 36 to 85; the sequence is KRYQKEIITAEEFTTAGRSVKTGLVAAAVVSSWIWCSTLLTSSTKEYADG. A helical transmembrane segment spans residues 86 to 106; that stretch reads IFGGYAYAAGACFQIIAFAIL. The Cytoplasmic segment spans residues 107-130; sequence AIKTKQMAPNAHTYLELVRTRYGK. A helical transmembrane segment spans residues 131-151; the sequence is IGHGCYLFYAIATNILVTSML. Over 152 to 166 the chain is Extracellular; sequence LTSGSAVFSDLTGMN. A helical transmembrane segment spans residues 167–187; it reads TIASCFLLPVGVVVYTLFGGI. Over 188 to 189 the chain is Cytoplasmic; the sequence is KA. A helical transmembrane segment spans residues 190–210; sequence TFLTDYMHTCVIIIIVLVFAF. Over 211–253 the chain is Extracellular; the sequence is KVYATSDVLGSPGKVYDLVREAAKRHPVDGNYQGEYMTMTSKS. A helical membrane pass occupies residues 254–274; sequence AGILLIINLIGNFGTVFLDNG. Topologically, residues 275-295 are cytoplasmic; sequence YWNKAISASPAASLKAYAIGG. The helical transmembrane segment at 296–316 threads the bilayer; it reads LAWFAVPSLISLTMGLACLAV. Over 317–343 the chain is Extracellular; it reads ETSPNFPTYPDPLTSFQANSGLVLPAA. Residues 344–364 traverse the membrane as a helical segment; sequence AIAIMGKGGAVASLLMIFMAV. Residues 365-403 lie on the Cytoplasmic side of the membrane; sequence TSAMSAELIAVSSVFTYDIYREYIDPRASGKKLIYTSHV. The chain crosses the membrane as a helical span at residues 404-424; that stretch reads ACIFFGLAMSGFSVGLYYGGI. A topological domain (extracellular) is located at residue serine 425. Residues 426 to 446 traverse the membrane as a helical segment; the sequence is MGYIYEMMGIIISSAVLPVVL. Residues 447 to 454 lie on the Cytoplasmic side of the membrane; sequence TLCSKDMN. Residues 455-475 form a helical membrane-spanning segment; the sequence is LVAAVVSPILGTGLAIMSWLV. Topologically, residues 476 to 496 are extracellular; it reads CTKSLYKELTVDTTFMDYPML. The helical transmembrane segment at 497–517 threads the bilayer; it reads TGNLVALLSPAIFIPILTYVF. Over 518–618 the chain is Cytoplasmic; the sequence is KPQNFDWEKM…EQRELARGLK (101 aa). Positions 553–572 are disordered; that stretch reads ANDKEQEEETNSLVSDSEKN. Residues 619–639 form a helical membrane-spanning segment; it reads IAYFLCVFFALAFLVVWPMPM. Topologically, residues 640-650 are extracellular; that stretch reads YGSKYIFSKKF. The chain crosses the membrane as a helical span at residues 651–671; it reads FTGWVVVMIIWLFFSAFAVCI. Topologically, residues 672–735 are cytoplasmic; it reads YPLWEGRHGI…SHFGQVDEII (64 aa).

Belongs to the sodium:solute symporter (SSF) (TC 2.A.21) family. In terms of assembly, may polymerize.

The protein resides in the membrane. Its function is as follows. Required for active transport of urea. The polypeptide is Urea active transporter (DUR3) (Saccharomyces cerevisiae (strain ATCC 204508 / S288c) (Baker's yeast)).